The following is a 233-amino-acid chain: 2-C-methyl-D-erythritol 4-phosphate cytidylyltransferase (233 aa).

Belongs to the IspD/TarI cytidylyltransferase family. IspD subfamily.

It carries out the reaction 2-C-methyl-D-erythritol 4-phosphate + CTP + H(+) = 4-CDP-2-C-methyl-D-erythritol + diphosphate. Its pathway is isoprenoid biosynthesis; isopentenyl diphosphate biosynthesis via DXP pathway; isopentenyl diphosphate from 1-deoxy-D-xylulose 5-phosphate: step 2/6. Functionally, catalyzes the formation of 4-diphosphocytidyl-2-C-methyl-D-erythritol from CTP and 2-C-methyl-D-erythritol 4-phosphate (MEP). This chain is 2-C-methyl-D-erythritol 4-phosphate cytidylyltransferase, found in Geotalea uraniireducens (strain Rf4) (Geobacter uraniireducens).